The primary structure comprises 301 residues: Immune-associated nucleotide-binding protein 5 (301 aa).

In terms of domain architecture, AIG1-type G spans 11-214; it reads EPVRNIVLVG…FTEENDLNEK (204 aa). Positions 20-27 are G1; the sequence is GPTGNGKS. GTP is bound at residue 20–28; that stretch reads GPTGNGKSS. The G2 stretch occupies residues 46 to 50; sequence CKTCK. Residues 63-66 form a G3 region; it reads DTPG. Residues 133–136 are G4; the sequence is TGGD. The segment at 172 to 174 is G5; it reads NNK. A GTP-binding site is contributed by asparagine 173.

It belongs to the TRAFAC class TrmE-Era-EngA-EngB-Septin-like GTPase superfamily. AIG1/Toc34/Toc159-like paraseptin GTPase family. IAN subfamily. In terms of tissue distribution, expressed in pollen, cotyledons and lateral roots.

The chain is Immune-associated nucleotide-binding protein 5 from Arabidopsis thaliana (Mouse-ear cress).